The sequence spans 1708 residues: Non-structural polyprotein pORF1 (1708 aa).

The Alphavirus-like MT domain maps to 56–240 (VFRPEVLWNH…HDVSILRAWI (185 aa)). The interval 60–240 (EVLWNHPIQR…HDVSILRAWI (181 aa)) is methyltransferase. The Y-domain stretch occupies residues 241–439 (RTTKIVGDHP…FYAQCRRWLS (199 aa)). Cysteines 434 and 481 form a disulfide. A putative protease region spans residues 442–509 (FHLDPRVLVF…EAYEGSEVDP (68 aa)). The zinc-binding stretch occupies residues 510–691 (AEPAHLDVSG…FSPGHIWESA (182 aa)). The Zn(2+) site is built by His-671, Glu-673, and His-686. The tract at residues 714–793 (FSPPEAAAPV…PPTPPPSRTR (80 aa)) is hinge. One can recognise a Macro domain in the interval 790–936 (SRTRRLLYTY…LYLTEPAAAW (147 aa)). The X-domain stretch occupies residues 800 to 957 (PDGAKVYAGS…TITEDTARTA (158 aa)). The region spanning 949 to 1097 (ITEDTARTAN…RPELAPTSWW (149 aa)) is the (+)RNA virus helicase ATP-binding domain. Positions 975 to 1219 (GCTISPGIVH…ISDVIVNNFF (245 aa)) are NTPase/helicase. 990 to 997 (GVPGSGKS) is an ATP binding site. Residues 1098–1231 (HVTHRCPADV…GGEVGHHRPS (134 aa)) enclose the (+)RNA virus helicase C-terminal domain. Residues 1222 to 1708 (GGEVGHHRPS…LTNSIIQRVE (487 aa)) are RNA-directed RNA polymerase. The 112-residue stretch at 1469-1580 (CMVFENDFSE…LCSDYRQSRN (112 aa)) folds into the RdRp catalytic domain.

Belongs to the hepevirus non-structural polyprotein family. As to quaternary structure, the protease domain interacts with host EIF2AK4 (via C-terminus); this interaction inhibits dimerization of EIF2AK4 and prevents EIF2AK4-mediated phosphorylation of host EIF2A. Mg(2+) is required as a cofactor. Post-translationally, ORF1 polyprotein does not seem to be processed into distinct enzymatic domains by a viral protease belonging to ORF1, but could be processed by a host serine protease like thrombin.

It localises to the host cytoplasm. The protein resides in the host perinuclear region. The catalysed reaction is RNA(n) + a ribonucleoside 5'-triphosphate = RNA(n+1) + diphosphate. It catalyses the reaction GTP + S-adenosyl-L-methionine = N(7)-methyl-GTP + S-adenosyl-L-homocysteine. With respect to regulation, putative protease: Inhibited by chymostatin. Methyltransferase: Displays a capping enzyme activity. This function is necessary since all viral RNAs are synthesized in the cytoplasm, and host capping enzymes are restricted to the nucleus. The enzymatic reaction involves a covalent link between 7-methyl-GMP and the methyltransferase, whereas eukaryotic capping enzymes form a covalent complex only with GMP. Methyltransferase catalyzes transfer of a methyl group from S-adenosylmethionine to GTP and GDP to yield m(7)GTP or m(7)GDP. GDP is a better substrate than GTP. This enzyme also displays guanylyltransferase activity to form a covalent complex, methyltransferase-m(7)GMP, from which 7-methyl-GMP is transferred to the mRNA to create the cap structure. Functionally, Y-domain: Indispensable for virus replication. Its function is as follows. Putative protease: The putative protease domain although necessary for replication of the virus may not be a protease but rather a structural Zn(2+)-binding domain. Inhibits induction of IFN-beta by MDA5 and RIG-I pathways and down-regulates the expression of MDA5. In terms of biological role, NTPase/helicase: Multi-functional protein that exhibits NTPase and RNA unwinding activities. Hydrolyzes all NTPs efficiently and unwinds RNA duplexes containing 5' overhangs. Possesses a sequence independent RNA-5'-triphosphatase (RTPase) activity suggestive of its role in forming viral cap structure. Also participates in viral genome replication, RNA translocation and genome packaging/unpackaging. RNA-directed RNA polymerase: Plays an essential role in the virus replication. Binds to the 3'-end of the genomic RNA to initiate viral replication. The polypeptide is Non-structural polyprotein pORF1 (Bandicota bengalensis (lesser bandicoot rat)).